A 233-amino-acid chain; its full sequence is Bcl-2-like protein 1 (233 aa).

The BH4 motif lies at serine 4–tryptophan 24. The disordered stretch occupies residues serine 28–histidine 71. Serine 49 carries the post-translational modification Phosphoserine; by PLK3. The residue at position 62 (serine 62) is a Phosphoserine; by CDK1. Positions valine 86–arginine 100 match the BH3 motif. Positions glutamate 129 to glycine 148 match the BH1 motif. The BH2 signature appears at proline 180–tyrosine 195. A helical membrane pass occupies residues phenylalanine 210–leucine 226.

It belongs to the Bcl-2 family. Homodimer. Interacts with BCL2L11. Interacts with BAD. Interacts with PGAM5. Interacts with HEBP2. Interacts with p53/TP53 and BBC3; interaction with BBC3 disrupts the interaction with p53/TP53. Interacts with ATP5F1A and ATP5F1B; the interactions mediate the association of isoform Bcl-X(L) with the mitochondrial membrane ATP synthase F(1)F(0) ATP synthase. Interacts with VDAC1. Interacts with BCL2L11 (via BH3). Interacts with RNF183. Interacts with GIMAP3/IAN4 and GIMAP5/IAN5. Interacts with GIMAP5 and HSPA8/HSC70; the interaction between HSPA8 and BCL2L1 is impaired in the absence of GIMAP5. Interacts with isoform 4 of CLU; this interaction releases and activates BAX and promotes cell death. In terms of assembly, forms heterodimers with BAX, BAK or BCL2; heterodimerization with BAX does not seem to be required for anti-apoptotic activity. Interacts with isoform 1 of SIVA1; the interaction inhibits the anti-apoptotic activity. Interacts with IKZF3. Interacts with RTL10/BOP. Interacts with DNM1L and CLTA; DNM1L and BCL2L1 isoform BCL-X(L) may form a complex in synaptic vesicles that also contains clathrin and MFF. Interacts (via the loop between motifs BH4 and BH3) with NLRP1 (via LRR repeats), but not with NLRP2, NLRP3, NLRP4, PYCARD, nor MEFV. Interacts with BECN1. Post-translationally, proteolytically cleaved by caspases during apoptosis. The cleaved protein, lacking the BH4 motif, has pro-apoptotic activity. Phosphorylated on Ser-62 by CDK1. This phosphorylation is partial in normal mitotic cells, but complete in G2-arrested cells upon DNA-damage, thus promoting subsequent apoptosis probably by triggering caspases-mediated proteolysis. Phosphorylated by PLK3, leading to regulate the G2 checkpoint and progression to cytokinesis during mitosis. Phosphorylation at Ser-49 appears during the S phase and G2, disappears rapidly in early mitosis during prometaphase, metaphase and early anaphase, and re-appears during telophase and cytokinesis. In terms of processing, ubiquitinated by RNF183 during prolonged ER stress, leading to degradation by the proteosome. As to expression, bcl-X(S) is expressed at high levels in cells that undergo a high rate of turnover, such as developing lymphocytes. In contrast, Bcl-X(L) is found in tissues containing long-lived postmitotic cells, such as adult brain.

The protein resides in the mitochondrion inner membrane. The protein localises to the mitochondrion outer membrane. It is found in the mitochondrion matrix. It localises to the cytoplasmic vesicle. Its subcellular location is the secretory vesicle. The protein resides in the synaptic vesicle membrane. The protein localises to the cytoplasm. It is found in the cytosol. It localises to the cytoskeleton. Its subcellular location is the microtubule organizing center. The protein resides in the centrosome. The protein localises to the nucleus membrane. Functionally, potent inhibitor of cell death. Inhibits activation of caspases. Appears to regulate cell death by blocking the voltage-dependent anion channel (VDAC) by binding to it and preventing the release of the caspase activator, CYC1, from the mitochondrial membrane. Also acts as a regulator of G2 checkpoint and progression to cytokinesis during mitosis. Isoform Bcl-X(L) also regulates presynaptic plasticity, including neurotransmitter release and recovery, number of axonal mitochondria as well as size and number of synaptic vesicle clusters. During synaptic stimulation, increases ATP availability from mitochondria through regulation of mitochondrial membrane ATP synthase F(1)F(0) activity and regulates endocytic vesicle retrieval in hippocampal neurons through association with DMN1L and stimulation of its GTPase activity in synaptic vesicles. May attenuate inflammation impairing NLRP1-inflammasome activation, hence CASP1 activation and IL1B release. Its function is as follows. Isoform Bcl-X(S) promotes apoptosis. The protein is Bcl-2-like protein 1 (BCL2L1) of Homo sapiens (Human).